Reading from the N-terminus, the 401-residue chain is GRIP domain-containing protein C119.12 (401 aa).

Residues 7 to 296 (NETKLVENEN…TLLIGKLQHE (290 aa)) adopt a coiled-coil conformation. In terms of domain architecture, GRIP spans 315-366 (NNAEKIDKQLISNLFVSFLTLPRADTKRFEILQLISSVLDWNDTQREQTGLQ).

The protein resides in the golgi apparatus lumen. The sequence is that of GRIP domain-containing protein C119.12 from Schizosaccharomyces pombe (strain 972 / ATCC 24843) (Fission yeast).